The primary structure comprises 522 residues: Lysine--tRNA ligase (522 aa).

Residues 44–52 (PSGLPHIGT) carry the 'HIGH' region motif. The 'KMSKS' region motif lies at 290 to 294 (KISKS). An ATP-binding site is contributed by K293.

This sequence belongs to the class-I aminoacyl-tRNA synthetase family.

The protein resides in the cytoplasm. It carries out the reaction tRNA(Lys) + L-lysine + ATP = L-lysyl-tRNA(Lys) + AMP + diphosphate. In Rickettsia rickettsii (strain Iowa), this protein is Lysine--tRNA ligase.